A 423-amino-acid polypeptide reads, in one-letter code: MLDMKKIRQNVEVVQKKLKTRGVDEEVLLRFLALDEGRRALLVKVEELKKHRNQVSGEIAQLKRAQKDASQQLLNMQEVSEQIKVLDQEVVHLQEQCTAIAERLPNLPHESVPVGADEAANVEVRRWSTPKTFSFEPKPHWEIGEALGILDFERGAKVSGSRFLYYKGLGARLERAVYNFMLDQHVNEHGYTEVIPPYLVNSKAMFGTGQFPKFKEDVFQVAESDLTLIPTAEVPLTNYYNNEILDAQELPIYFTALSPSFRSEAGSAGRDTRGLIRLHQFHKVEMVKFSDAEHSYEELEKMTNNAGDILEKLGLPYRVITLSTGDMGFSAAKTYDLEVWIPAQKTYREISSCSNCEDFQARRALIRYRDKTGHVQYAHTLNGSGLAVGRTVAAILENYQNEDGTVTIPEVLRPYMGGLTKID.

An L-serine-binding site is contributed by 231 to 233 (TAE). 262–264 (RSE) is an ATP binding site. E285 lines the L-serine pocket. Residue 349 to 352 (EISS) coordinates ATP. S384 contacts L-serine.

Belongs to the class-II aminoacyl-tRNA synthetase family. Type-1 seryl-tRNA synthetase subfamily. As to quaternary structure, homodimer. The tRNA molecule binds across the dimer.

The protein resides in the cytoplasm. The catalysed reaction is tRNA(Ser) + L-serine + ATP = L-seryl-tRNA(Ser) + AMP + diphosphate + H(+). The enzyme catalyses tRNA(Sec) + L-serine + ATP = L-seryl-tRNA(Sec) + AMP + diphosphate + H(+). Its pathway is aminoacyl-tRNA biosynthesis; selenocysteinyl-tRNA(Sec) biosynthesis; L-seryl-tRNA(Sec) from L-serine and tRNA(Sec): step 1/1. Its function is as follows. Catalyzes the attachment of serine to tRNA(Ser). Is also able to aminoacylate tRNA(Sec) with serine, to form the misacylated tRNA L-seryl-tRNA(Sec), which will be further converted into selenocysteinyl-tRNA(Sec). The chain is Serine--tRNA ligase 1 from Enterococcus faecalis (strain ATCC 700802 / V583).